Here is a 189-residue protein sequence, read N- to C-terminus: Transcription factor E (189 aa).

Residues 9-101 (AVKSLEIYVR…FWRIDSDTIN (93 aa)) enclose the HTH TFE/IIEalpha-type domain.

It belongs to the TFE family. As to quaternary structure, monomer. Interaction with RNA polymerase subunits RpoF and RpoE is necessary for Tfe stimulatory transcription activity. Able to interact with Tbp and RNA polymerase in the absence of DNA promoter. Interacts both with the preinitiation and elongation complexes.

Functionally, transcription factor that plays a role in the activation of archaeal genes transcribed by RNA polymerase. Facilitates transcription initiation by enhancing TATA-box recognition by TATA-box-binding protein (Tbp), and transcription factor B (Tfb) and RNA polymerase recruitment. Not absolutely required for transcription in vitro, but particularly important in cases where Tbp or Tfb function is not optimal. It dynamically alters the nucleic acid-binding properties of RNA polymerases by stabilizing the initiation complex and destabilizing elongation complexes. Seems to translocate with the RNA polymerase following initiation and acts by binding to the non template strand of the transcription bubble in elongation complexes. This Aeropyrum pernix (strain ATCC 700893 / DSM 11879 / JCM 9820 / NBRC 100138 / K1) protein is Transcription factor E.